Here is a 206-residue protein sequence, read N- to C-terminus: Pyridoxine/pyridoxamine 5'-phosphate oxidase (206 aa).

FMN-binding positions include 53–58, 68–69, Lys-75, and Gln-97; these read RMVLLK and YT. Lys-58 is a binding site for substrate. Residues Tyr-115, Arg-119, and Ser-123 each contribute to the substrate site. FMN contacts are provided by residues 132 to 133 and Trp-177; that span reads QS. 183 to 185 lines the substrate pocket; that stretch reads RLH. FMN is bound at residue Arg-187.

The protein belongs to the pyridoxamine 5'-phosphate oxidase family. In terms of assembly, homodimer. It depends on FMN as a cofactor.

It carries out the reaction pyridoxamine 5'-phosphate + O2 + H2O = pyridoxal 5'-phosphate + H2O2 + NH4(+). It catalyses the reaction pyridoxine 5'-phosphate + O2 = pyridoxal 5'-phosphate + H2O2. The protein operates within cofactor metabolism; pyridoxal 5'-phosphate salvage; pyridoxal 5'-phosphate from pyridoxamine 5'-phosphate: step 1/1. Its pathway is cofactor metabolism; pyridoxal 5'-phosphate salvage; pyridoxal 5'-phosphate from pyridoxine 5'-phosphate: step 1/1. Functionally, catalyzes the oxidation of either pyridoxine 5'-phosphate (PNP) or pyridoxamine 5'-phosphate (PMP) into pyridoxal 5'-phosphate (PLP). This is Pyridoxine/pyridoxamine 5'-phosphate oxidase from Rhizobium etli (strain CIAT 652).